A 948-amino-acid polypeptide reads, in one-letter code: Protein translocase subunit SecA (948 aa).

Residues glutamine 90, glycine 108–threonine 112, and aspartate 509 each bind ATP.

This sequence belongs to the SecA family. Monomer and homodimer. Part of the essential Sec protein translocation apparatus which comprises SecA, SecYEG and auxiliary proteins SecDF. Other proteins may also be involved.

It localises to the cell inner membrane. Its subcellular location is the cellular thylakoid membrane. The protein localises to the cytoplasm. The enzyme catalyses ATP + H2O + cellular proteinSide 1 = ADP + phosphate + cellular proteinSide 2.. Part of the Sec protein translocase complex. Interacts with the SecYEG preprotein conducting channel. Has a central role in coupling the hydrolysis of ATP to the transfer of proteins into and across the cell membrane, serving as an ATP-driven molecular motor driving the stepwise translocation of polypeptide chains across the membrane. Functionally, probably participates in protein translocation into and across both the cytoplasmic and thylakoid membranes in cyanobacterial cells. The protein is Protein translocase subunit SecA of Prochlorococcus marinus (strain MIT 9313).